A 293-amino-acid chain; its full sequence is MTTARYRPTWDLALDPLVSCKLCLGEFPLEQMTTITQCQCVFCTMCLKQYVELLIKEGFETAISCPDSACPKRGHLQENEIECMVATEIMQRYRKLQFEKEVLLDPSRTWCPSSTCQAVCQLKESDTVLPQLVRCSVCTLEFCSACKASWHPDQDCQENVPITSFLPGESSSFFKADDDDAPIKRCPKCKVYIERDEGCAQMMCKNCKHAFCWYCLESLDDDFLLIHYDKGPCRNKLGHSRASVIWHRTQVVGIFAGFGLLLLVASPFLLLATPFVLCCKCKCSKGDDDPLPT.

The tract at residues 16–237 (PLVSCKLCLG…YDKGPCRNKL (222 aa)) is TRIAD supradomain. Positions 20, 23, 43, 46, 111, 116, 135, 138, 143, 146, 151, 156, 186, and 189 each coordinate Zn(2+). The RING-type 1 zinc finger occupies 20 to 70 (CKLCLGEFPLEQMTTITQCQCVFCTMCLKQYVELLIKEGFETAISCPDSAC). The IBR-type zinc finger occupies 91–156 (QRYRKLQFEK…KASWHPDQDC (66 aa)). An RING-type 2; atypical zinc finger spans residues 186 to 215 (CPKCKVYIERDEGCAQMMCKNCKHAFCWYC). Residue C199 is part of the active site. Residues C204, C207, C212, C215, H227, and C233 each contribute to the Zn(2+) site. Residues 251 to 271 (VVGIFAGFGLLLLVASPFLLL) form a helical membrane-spanning segment.

This sequence belongs to the RBR family. RNF144 subfamily.

It localises to the membrane. The catalysed reaction is [E2 ubiquitin-conjugating enzyme]-S-ubiquitinyl-L-cysteine + [acceptor protein]-L-lysine = [E2 ubiquitin-conjugating enzyme]-L-cysteine + [acceptor protein]-N(6)-ubiquitinyl-L-lysine.. Its pathway is protein modification; protein ubiquitination. Its function is as follows. E3 ubiquitin-protein ligase which accepts ubiquitin from E2 ubiquitin-conjugating enzymes ube2l3 and ube2l6 in the form of a thioester and then directly transfers the ubiquitin to targeted substrates. This chain is Probable E3 ubiquitin-protein ligase RNF144A-A (rnf144aa), found in Danio rerio (Zebrafish).